Reading from the N-terminus, the 195-residue chain is Granulocyte colony-stimulating factor (195 aa).

An N-terminal signal peptide occupies residues Met-1–Ala-21. Disulfide bonds link Cys-57–Cys-63 and Cys-85–Cys-95. Thr-154 is a glycosylation site (O-linked (GalNAc...) threonine).

The protein belongs to the IL-6 superfamily. Monomer. O-glycosylated.

It localises to the secreted. Its function is as follows. Granulocyte/macrophage colony-stimulating factors are cytokines that act in hematopoiesis by controlling the production, differentiation, and function of 2 related white cell populations of the blood, the granulocytes and the monocytes-macrophages. This CSF induces granulocytes. This Sus scrofa (Pig) protein is Granulocyte colony-stimulating factor (CSF3).